The sequence spans 517 residues: Maturase K (517 aa).

Belongs to the intron maturase 2 family. MatK subfamily.

It is found in the plastid. It localises to the chloroplast. Functionally, usually encoded in the trnK tRNA gene intron. Probably assists in splicing its own and other chloroplast group II introns. In Trillium grandiflorum (Large-flowered trillium), this protein is Maturase K.